Reading from the N-terminus, the 450-residue chain is Signal recognition particle protein (450 aa).

GTP-binding positions include 106–113 (GLQGSGKT), 188–192 (DTAGR), and 246–249 (TKLD).

It belongs to the GTP-binding SRP family. SRP54 subfamily. Part of the signal recognition particle protein translocation system, which is composed of SRP and FtsY.

It is found in the cytoplasm. It catalyses the reaction GTP + H2O = GDP + phosphate + H(+). In terms of biological role, involved in targeting and insertion of nascent membrane proteins into the cytoplasmic membrane. Binds to the hydrophobic signal sequence of the ribosome-nascent chain (RNC) as it emerges from the ribosomes. The SRP-RNC complex is then targeted to the cytoplasmic membrane where it interacts with the SRP receptor FtsY. This is Signal recognition particle protein from Mycoplasma pneumoniae (strain ATCC 29342 / M129 / Subtype 1) (Mycoplasmoides pneumoniae).